Reading from the N-terminus, the 508-residue chain is Polyamine oxidase FMS1 (508 aa).

It belongs to the flavin monoamine oxidase family. Requires FAD as cofactor.

The enzyme catalyses spermine + O2 + H2O = 3-aminopropanal + spermidine + H2O2. The catalysed reaction is spermidine + O2 + H2O = 3-aminopropanal + putrescine + H2O2. It catalyses the reaction N(1)-acetylspermine + O2 + H2O = 3-acetamidopropanal + spermidine + H2O2. It carries out the reaction N(1)-acetylspermidine + O2 + H2O = 3-acetamidopropanal + putrescine + H2O2. The enzyme catalyses N(8)-acetylspermidine + O2 + H2O = 4-acetamidobutanal + propane-1,3-diamine + H2O2. In terms of biological role, involved in the production of beta-alanine, a precursor of pantothenic acid. Multicopy suppressor of fenpropimorph resistance. This chain is Polyamine oxidase FMS1 (FMS1), found in Saccharomyces cerevisiae (strain ATCC 204508 / S288c) (Baker's yeast).